A 274-amino-acid chain; its full sequence is 2,3,4,5-tetrahydropyridine-2,6-dicarboxylate N-succinyltransferase (274 aa).

The protein belongs to the transferase hexapeptide repeat family.

It localises to the cytoplasm. The enzyme catalyses (S)-2,3,4,5-tetrahydrodipicolinate + succinyl-CoA + H2O = (S)-2-succinylamino-6-oxoheptanedioate + CoA. The protein operates within amino-acid biosynthesis; L-lysine biosynthesis via DAP pathway; LL-2,6-diaminopimelate from (S)-tetrahydrodipicolinate (succinylase route): step 1/3. The sequence is that of 2,3,4,5-tetrahydropyridine-2,6-dicarboxylate N-succinyltransferase from Klebsiella pneumoniae (strain 342).